A 181-amino-acid polypeptide reads, in one-letter code: ATP-dependent protease subunit HslV (181 aa).

The active site involves T6. The Na(+) site is built by G162, C165, and T168.

This sequence belongs to the peptidase T1B family. HslV subfamily. A double ring-shaped homohexamer of HslV is capped on each side by a ring-shaped HslU homohexamer. The assembly of the HslU/HslV complex is dependent on binding of ATP.

Its subcellular location is the cytoplasm. The catalysed reaction is ATP-dependent cleavage of peptide bonds with broad specificity.. Its activity is regulated as follows. Allosterically activated by HslU binding. In terms of biological role, protease subunit of a proteasome-like degradation complex believed to be a general protein degrading machinery. In Nitratidesulfovibrio vulgaris (strain ATCC 29579 / DSM 644 / CCUG 34227 / NCIMB 8303 / VKM B-1760 / Hildenborough) (Desulfovibrio vulgaris), this protein is ATP-dependent protease subunit HslV.